Consider the following 144-residue polypeptide: C-type isolectin Sp-CL4 (144 aa).

A C-type lectin domain is found at 27–144 (DENRKVKYFE…CSEKLPFMCA (118 aa)). 2 disulfide bridges follow: Cys48–Cys143 and Cys119–Cys135.

The protein belongs to the true venom lectin family. Post-translationally, glycosylated with a carbohydrate of 383 Da. In terms of tissue distribution, expressed by the venom gland.

It localises to the secreted. Its function is as follows. The role of this hemagglutinin in the venom is unknown, because it is masked by the high venom hemolytic activity. Lectin with specificity to galactose. Induces hemagglutination. In Scorpaena plumieri (Spotted scorpionfish), this protein is C-type isolectin Sp-CL4.